The sequence spans 146 residues: Hemoglobin subunit beta (146 aa).

Val-1 is modified (N-acetylvaline). Residues 2 to 146 form the Globin domain; it reads HLTGEEKAAV…VANALAHKYH (145 aa). Thr-12 carries the post-translational modification Phosphothreonine. Ser-44 bears the Phosphoserine mark. Lys-59 carries the N6-acetyllysine modification. Heme b is bound at residue His-63. Lys-82 is modified (N6-acetyllysine). Residue His-92 participates in heme b binding. Cys-93 carries the S-nitrosocysteine modification. Lys-144 carries the post-translational modification N6-acetyllysine.

It belongs to the globin family. As to quaternary structure, heterotetramer of two alpha chains and two beta chains. Red blood cells.

Its function is as follows. Involved in oxygen transport from the lung to the various peripheral tissues. This Mustela putorius furo (European domestic ferret) protein is Hemoglobin subunit beta (HBB).